Consider the following 60-residue polypeptide: Large ribosomal subunit protein bL33 (60 aa).

Belongs to the bacterial ribosomal protein bL33 family.

This Flavobacterium johnsoniae (strain ATCC 17061 / DSM 2064 / JCM 8514 / BCRC 14874 / CCUG 350202 / NBRC 14942 / NCIMB 11054 / UW101) (Cytophaga johnsonae) protein is Large ribosomal subunit protein bL33.